A 530-amino-acid chain; its full sequence is Asc-type amino acid transporter 1 (530 aa).

The segment at 1–36 (MRRDSDMASHIQQPGGHGNPGPAPSPSPGPGPGPGA) is disordered. Residues 21-33 (GPAPSPSPGPGPG) show a composition bias toward pro residues. 10 consecutive transmembrane segments (helical) span residues 46 to 66 (IGLV…GIFI), 78 to 98 (VGLA…GSLC), 119 to 139 (IFGG…MYPT), 192 to 212 (IQVI…TVGF), 274 to 294 (AIFI…VAYF), 316 to 336 (LLGY…FGGI), 368 to 388 (CTPI…MLVG), 394 to 414 (INYV…GLLV), 430 to 450 (LLVP…SFIS), and 454 to 474 (VCGV…LGVF). Residues 508–530 (EEENGPMGQPSPLPITDKPLKTQ) form a disordered region.

It belongs to the amino acid-polyamine-organocation (APC) superfamily. In terms of assembly, disulfide-linked heterodimer with the amino acid transport protein SLC3A2/4F2hc.

Its subcellular location is the cell membrane. It catalyses the reaction L-alanine(in) + glycine(out) = L-alanine(out) + glycine(in). The catalysed reaction is L-serine(out) + L-alanine(in) = L-serine(in) + L-alanine(out). The enzyme catalyses L-threonine(out) + L-alanine(in) = L-threonine(in) + L-alanine(out). It carries out the reaction L-cysteine(out) + L-alanine(in) = L-cysteine(in) + L-alanine(out). It catalyses the reaction 2-aminoisobutanoate(out) + L-alanine(in) = 2-aminoisobutanoate(in) + L-alanine(out). The catalysed reaction is D-serine(out) + L-alanine(in) = D-serine(in) + L-alanine(out). The enzyme catalyses D-alanine(out) + L-alanine(in) = D-alanine(in) + L-alanine(out). It carries out the reaction L-valine(out) + L-alanine(in) = L-valine(in) + L-alanine(out). It catalyses the reaction L-methionine(out) + L-alanine(in) = L-methionine(in) + L-alanine(out). The catalysed reaction is beta-alanine(out) + L-alanine(in) = beta-alanine(in) + L-alanine(out). The enzyme catalyses D-cysteine(out) + L-alanine(in) = D-cysteine(in) + L-alanine(out). It carries out the reaction D-threonine(out) + L-alanine(in) = D-threonine(in) + L-alanine(out). It catalyses the reaction D-isoleucine(out) + D-serine(in) = D-isoleucine(in) + D-serine(out). The catalysed reaction is D-serine(in) = D-serine(out). Associates with SLC3A2/4F2hc to form a functional heterodimeric complex that translocates small neutral L- and D-amino acids across the plasma membrane. Preferentially mediates exchange transport, but can also operate via facilitated diffusion. Acts as a major transporter for glycine, L- and D-serine in the central nervous system. At the spinal cord and brainstem regulates glycine metabolism and glycinergic inhibitory neurotransmission by providing for glycine de novo synthesis from L-serine and glycine recycling from astrocytes to glycinergic motor neurons. At Schaffer collateral-CA1 synapses mediates D-serine and glycine release that modulates post-synaptic activation of NMDA receptors and excitatory glutamatergic transmission. May regulate D-serine release from mesenchymal progenitors located in developing subcutaneous adipose tissue, favoring white adipocyte over thermogenic beige adipocyte lineage commitment. The sequence is that of Asc-type amino acid transporter 1 (Slc7a10) from Rattus norvegicus (Rat).